Reading from the N-terminus, the 174-residue chain is ATP-dependent protease subunit HslV (174 aa).

The active site involves Thr-2. Positions 157, 160, and 163 each coordinate Na(+).

Belongs to the peptidase T1B family. HslV subfamily. In terms of assembly, a double ring-shaped homohexamer of HslV is capped on each side by a ring-shaped HslU homohexamer. The assembly of the HslU/HslV complex is dependent on binding of ATP.

It localises to the cytoplasm. The catalysed reaction is ATP-dependent cleavage of peptide bonds with broad specificity.. With respect to regulation, allosterically activated by HslU binding. Protease subunit of a proteasome-like degradation complex believed to be a general protein degrading machinery. The sequence is that of ATP-dependent protease subunit HslV from Shewanella putrefaciens (strain CN-32 / ATCC BAA-453).